A 63-amino-acid polypeptide reads, in one-letter code: MGCGNSTAASAGAGQGPAGAAKDVTEESITEDDKRRNYGGVYVGLPSEAVNMVSNQTKTVQKN.

Positions 1-12 (MGCGNSTAASAG) are enriched in low complexity. Residues 1–40 (MGCGNSTAASAGAGQGPAGAAKDVTEESITEDDKRRNYGG) form a disordered region.

Belongs to the OCC1 family.

This Bos taurus (Bovine) protein is Overexpressed in colon carcinoma 1 protein homolog.